Here is an 871-residue protein sequence, read N- to C-terminus: Ubiquitin carboxyl-terminal hydrolase 8 (871 aa).

In terms of domain architecture, DUSP spans Thr4–Gly99. In terms of domain architecture, USP spans Thr279–Leu869. The active-site Nucleophile is Cys288. The interval Glu615 to Glu650 is disordered. His828 serves as the catalytic Proton acceptor.

It belongs to the peptidase C19 family.

It catalyses the reaction Thiol-dependent hydrolysis of ester, thioester, amide, peptide and isopeptide bonds formed by the C-terminal Gly of ubiquitin (a 76-residue protein attached to proteins as an intracellular targeting signal).. Recognizes and hydrolyzes the peptide bond at the C-terminal Gly of ubiquitin. Involved in the processing of poly-ubiquitin precursors as well as that of ubiquitinated proteins. In Arabidopsis thaliana (Mouse-ear cress), this protein is Ubiquitin carboxyl-terminal hydrolase 8 (UBP8).